The sequence spans 469 residues: Putative dipeptidase SAR1836 (469 aa).

His-84 contributes to the Zn(2+) binding site. Asp-86 is a catalytic residue. Asp-115 is a Zn(2+) binding site. Catalysis depends on Glu-149, which acts as the Proton acceptor. Zn(2+) is bound by residues Glu-150, Asp-173, and His-440.

It belongs to the peptidase M20A family. The cofactor is Zn(2+).

This is Putative dipeptidase SAR1836 from Staphylococcus aureus (strain MRSA252).